A 380-amino-acid polypeptide reads, in one-letter code: Queuine tRNA-ribosyltransferase (380 aa).

The Proton acceptor role is filled by aspartate 96. Substrate-binding positions include 96 to 100, aspartate 150, glutamine 193, and glycine 220; that span reads DSGGF. Residues 251–257 are RNA binding; it reads GVGAPDS. The active-site Nucleophile is the aspartate 270. The interval 275 to 279 is RNA binding; important for wobble base 34 recognition; the sequence is TRIAR. Zn(2+)-binding residues include cysteine 308, cysteine 310, cysteine 313, and histidine 339.

The protein belongs to the queuine tRNA-ribosyltransferase family. In terms of assembly, homodimer. Within each dimer, one monomer is responsible for RNA recognition and catalysis, while the other monomer binds to the replacement base PreQ1. Zn(2+) serves as cofactor.

The catalysed reaction is 7-aminomethyl-7-carbaguanine + guanosine(34) in tRNA = 7-aminomethyl-7-carbaguanosine(34) in tRNA + guanine. Its pathway is tRNA modification; tRNA-queuosine biosynthesis. In terms of biological role, catalyzes the base-exchange of a guanine (G) residue with the queuine precursor 7-aminomethyl-7-deazaguanine (PreQ1) at position 34 (anticodon wobble position) in tRNAs with GU(N) anticodons (tRNA-Asp, -Asn, -His and -Tyr). Catalysis occurs through a double-displacement mechanism. The nucleophile active site attacks the C1' of nucleotide 34 to detach the guanine base from the RNA, forming a covalent enzyme-RNA intermediate. The proton acceptor active site deprotonates the incoming PreQ1, allowing a nucleophilic attack on the C1' of the ribose to form the product. After dissociation, two additional enzymatic reactions on the tRNA convert PreQ1 to queuine (Q), resulting in the hypermodified nucleoside queuosine (7-(((4,5-cis-dihydroxy-2-cyclopenten-1-yl)amino)methyl)-7-deazaguanosine). The protein is Queuine tRNA-ribosyltransferase of Streptococcus thermophilus (strain ATCC BAA-491 / LMD-9).